Reading from the N-terminus, the 345-residue chain is MTQITLTTPDDWHLHFRDGDMLGETVPATARLFQRAIVMPNLVPPVTTAAMALAYRDRILAARPQGSNFEPLMTLFLTNNTSAQDIIDAKAAGVVAGKLYPAGATTNSDAAVKALDELFPIFEVMAQQGMLLLVHGEVTESHIDIFDREKMFIDRYLSRIVEAIPSLKVVFEHITTKEAAEFVAEASANVAATITPQHLLLNRNDLLVGGVRPHNFCLPVLKRNIHQHALQAAVATGSSKFFLGTDSAPHEKHRKESACGCAGCYSAWSALELYAQVFDNLGALDKLEGFASLHGADFYGLPRNSGTVTLVKQEWTVPEEIILPNGNPIVPFFAGQKVNWKVKTA.

Zn(2+)-binding residues include His13 and His15. Residues 15 to 17 (HFR) and Asn41 each bind substrate. The Zn(2+) site is built by Lys98, His135, and His173. The residue at position 98 (Lys98) is an N6-carboxylysine. Substrate is bound at residue His135. Leu218 lines the substrate pocket. Asp246 serves as a coordination point for Zn(2+). The active site involves Asp246. 2 residues coordinate substrate: His250 and Ala262.

This sequence belongs to the metallo-dependent hydrolases superfamily. DHOase family. Class II DHOase subfamily. As to quaternary structure, homodimer. The cofactor is Zn(2+).

It catalyses the reaction (S)-dihydroorotate + H2O = N-carbamoyl-L-aspartate + H(+). It functions in the pathway pyrimidine metabolism; UMP biosynthesis via de novo pathway; (S)-dihydroorotate from bicarbonate: step 3/3. Its function is as follows. Catalyzes the reversible cyclization of carbamoyl aspartate to dihydroorotate. This is Dihydroorotase from Shewanella frigidimarina (strain NCIMB 400).